A 681-amino-acid polypeptide reads, in one-letter code: Potassium-transporting ATPase ATP-binding subunit (681 aa).

Helical transmembrane passes span 37-57 (MFVVEVGTFITLLATIFPTYF), 64-84 (VGYNALVTFILFVTVLFANFA), 218-238 (IALTTVLVSLTIIFIVVVMTL), and 255-275 (IALLVCLIPTTIGGLLSAIGI). Aspartate 306 acts as the 4-aspartylphosphate intermediate in catalysis. ATP-binding positions include aspartate 343, glutamate 347, 375–382 (FSAETRMS), and lysine 394. The Mg(2+) site is built by aspartate 517 and aspartate 521. The next 3 helical transmembrane spans lie at 573 to 595 (ALTTFSIANDVAKYFAILPAIIS), 615 to 635 (AILSALIYNAIIIPILIPIAM), and 655 to 675 (IYGLGGLIAPFVGIKLIDMII).

The protein belongs to the cation transport ATPase (P-type) (TC 3.A.3) family. Type IA subfamily. As to quaternary structure, the system is composed of three essential subunits: KdpA, KdpB and KdpC.

It is found in the cell membrane. It carries out the reaction K(+)(out) + ATP + H2O = K(+)(in) + ADP + phosphate + H(+). In terms of biological role, part of the high-affinity ATP-driven potassium transport (or Kdp) system, which catalyzes the hydrolysis of ATP coupled with the electrogenic transport of potassium into the cytoplasm. This subunit is responsible for energy coupling to the transport system and for the release of the potassium ions to the cytoplasm. This is Potassium-transporting ATPase ATP-binding subunit from Caldanaerobacter subterraneus subsp. tengcongensis (strain DSM 15242 / JCM 11007 / NBRC 100824 / MB4) (Thermoanaerobacter tengcongensis).